The primary structure comprises 100 residues: UPF0473 protein lwe1514 (100 aa).

Belongs to the UPF0473 family.

This Listeria welshimeri serovar 6b (strain ATCC 35897 / DSM 20650 / CCUG 15529 / CIP 8149 / NCTC 11857 / SLCC 5334 / V8) protein is UPF0473 protein lwe1514.